The sequence spans 338 residues: MHIGTTLTNYIIETQRNLPEATGEFTGLLNDISVACKRIADLVNKGDLVGMLGSADSENVQGETQKKLDVVTNEVFIEALTQNGHIAGLVSEEMDDIYTLPNPSQRGRYLLLCDPLDGSSNIDVNVSVGTIFSIVRAPQGSENPSAGDFLQHGTEQVAAGYCLYGPSTILVLAVKGQGVQMFTLNRDFGEFILTRKDVQIPEDTQEFAINVSNQRHWEEPVQRYIDECLQGKEGPRGQDFNMRWVASMVAEVHRILCRGGVFMYPLDAKIKAKGQNGRLRLMYEANPMSLIVEQAGGGATTGRQRILELDPSDIHERAPVVLGSRNEVERIARYHQEG.

4 residues coordinate Mg(2+): E92, D114, L116, and D117. Substrate contacts are provided by residues 117-120 (DGSS) and N210. A Mg(2+)-binding site is contributed by E284.

It belongs to the FBPase class 1 family. As to quaternary structure, homotetramer. Mg(2+) serves as cofactor.

Its subcellular location is the cytoplasm. It carries out the reaction beta-D-fructose 1,6-bisphosphate + H2O = beta-D-fructose 6-phosphate + phosphate. It functions in the pathway carbohydrate biosynthesis; gluconeogenesis. The chain is Fructose-1,6-bisphosphatase class 1 from Halorhodospira halophila (strain DSM 244 / SL1) (Ectothiorhodospira halophila (strain DSM 244 / SL1)).